The sequence spans 166 residues: Thiol peroxidase (166 aa).

Residues 18 to 166 form the Thioredoxin domain; it reads LKVGDKAPDV…NYEALLKVLK (149 aa). Cysteine 60 functions as the Cysteine sulfenic acid (-SOH) intermediate in the catalytic mechanism. Cysteine 60 and cysteine 94 form a disulfide bridge.

This sequence belongs to the peroxiredoxin family. Tpx subfamily. In terms of assembly, homodimer.

The enzyme catalyses a hydroperoxide + [thioredoxin]-dithiol = an alcohol + [thioredoxin]-disulfide + H2O. Thiol-specific peroxidase that catalyzes the reduction of hydrogen peroxide and organic hydroperoxides to water and alcohols, respectively. Plays a role in cell protection against oxidative stress by detoxifying peroxides. This is Thiol peroxidase from Helicobacter pylori (strain ATCC 700392 / 26695) (Campylobacter pylori).